Consider the following 389-residue polypeptide: Ribonucleoside-diphosphate reductase subunit M2 (389 aa).

A Phosphoserine modification is found at Ser-20. Residue Thr-33 is modified to Phosphothreonine. A Cy motif is present at residues 49–51 (RRI). Fe cation contacts are provided by Asp-138, Glu-169, and His-172. Tyr-176 is a catalytic residue. Fe cation contacts are provided by Glu-232, Glu-266, and His-269.

The protein belongs to the ribonucleoside diphosphate reductase small chain family. As to quaternary structure, heterodimer of a large and a small subunit. Interacts (via Cy motif and when phosphorylated at Thr-33) with CCNF; the interaction occurs exclusively in G2 and early M. It depends on Fe cation as a cofactor. In terms of processing, phosphorylation on Ser-20 relieves the inhibitory effect on Wnt signaling. Phosphorylated on Thr-33 by CDK1 and CDK2; predominantly in G2 and M phase. Post-translationally, ubiquitinated by the SCF(CCNF) E3 ubiquitin-protein ligase complex; leading to its degradation by the proteasome.

The protein resides in the cytoplasm. Its subcellular location is the nucleus. It carries out the reaction a 2'-deoxyribonucleoside 5'-diphosphate + [thioredoxin]-disulfide + H2O = a ribonucleoside 5'-diphosphate + [thioredoxin]-dithiol. In terms of biological role, provides the precursors necessary for DNA synthesis. Catalyzes the biosynthesis of deoxyribonucleotides from the corresponding ribonucleotides. Inhibits Wnt signaling. The sequence is that of Ribonucleoside-diphosphate reductase subunit M2 (RRM2) from Homo sapiens (Human).